We begin with the raw amino-acid sequence, 599 residues long: Proline--tRNA ligase (599 aa).

It belongs to the class-II aminoacyl-tRNA synthetase family. ProS type 1 subfamily. As to quaternary structure, homodimer.

Its subcellular location is the cytoplasm. The catalysed reaction is tRNA(Pro) + L-proline + ATP = L-prolyl-tRNA(Pro) + AMP + diphosphate. Functionally, catalyzes the attachment of proline to tRNA(Pro) in a two-step reaction: proline is first activated by ATP to form Pro-AMP and then transferred to the acceptor end of tRNA(Pro). As ProRS can inadvertently accommodate and process non-cognate amino acids such as alanine and cysteine, to avoid such errors it has two additional distinct editing activities against alanine. One activity is designated as 'pretransfer' editing and involves the tRNA(Pro)-independent hydrolysis of activated Ala-AMP. The other activity is designated 'posttransfer' editing and involves deacylation of mischarged Ala-tRNA(Pro). The misacylated Cys-tRNA(Pro) is not edited by ProRS. The protein is Proline--tRNA ligase of Prochlorococcus marinus (strain MIT 9303).